A 622-amino-acid chain; its full sequence is ABC transporter permease protein YxdM (622 aa).

10 helical membrane passes run A20–F40, G56–V76, A118–L138, I154–V174, P195–L215, V219–F239, L279–M299, T498–V518, I558–A578, and V590–L610.

Belongs to the ABC-4 integral membrane protein family. As to quaternary structure, the complex is composed of two ATP-binding proteins (YxdL) and two transmembrane proteins (YxdM).

Its subcellular location is the cell membrane. Its function is as follows. Part of the ABC transporter complex YxdLM which could be involved in peptide resistance. The protein is ABC transporter permease protein YxdM (yxdM) of Bacillus subtilis (strain 168).